The primary structure comprises 270 residues: Phosphatidylglycerol--prolipoprotein diacylglyceryl transferase (270 aa).

4 consecutive transmembrane segments (helical) span residues Phe-19 to Ala-39, Leu-56 to Glu-76, Gln-92 to Ala-112, and Gly-116 to Ile-136. Position 138 (Arg-138) interacts with a 1,2-diacyl-sn-glycero-3-phospho-(1'-sn-glycerol). Transmembrane regions (helical) follow at residues His-178–Leu-198, Gly-206–Leu-226, and Leu-236–Val-256.

Belongs to the Lgt family.

It localises to the cell membrane. The catalysed reaction is L-cysteinyl-[prolipoprotein] + a 1,2-diacyl-sn-glycero-3-phospho-(1'-sn-glycerol) = an S-1,2-diacyl-sn-glyceryl-L-cysteinyl-[prolipoprotein] + sn-glycerol 1-phosphate + H(+). The protein operates within protein modification; lipoprotein biosynthesis (diacylglyceryl transfer). In terms of biological role, catalyzes the transfer of the diacylglyceryl group from phosphatidylglycerol to the sulfhydryl group of the N-terminal cysteine of a prolipoprotein, the first step in the formation of mature lipoproteins. The sequence is that of Phosphatidylglycerol--prolipoprotein diacylglyceryl transferase from Bacillus cereus (strain ATCC 14579 / DSM 31 / CCUG 7414 / JCM 2152 / NBRC 15305 / NCIMB 9373 / NCTC 2599 / NRRL B-3711).